Here is a 489-residue protein sequence, read N- to C-terminus: Pluviatolide synthase (489 aa).

Residues 6-26 (SVLGLSSTLIIALAITVIFLL) traverse the membrane as a helical segment. Cys-432 contacts heme.

It belongs to the cytochrome P450 family. It depends on heme as a cofactor.

Its subcellular location is the membrane. It catalyses the reaction (-)-matairesinol + reduced [NADPH--hemoprotein reductase] + O2 = (-)-pluviatolide + oxidized [NADPH--hemoprotein reductase] + 2 H2O + H(+). Its pathway is aromatic compound metabolism; phenylpropanoid biosynthesis. Functionally, cytochrome P450 involved in the biosynthesis of etoposide, a chemotherapeutic compound of the topoisomerase inhibitor family. Catalyzes the conversion of matairesinol to pluviatolide. The chain is Pluviatolide synthase from Podophyllum peltatum (American mandrake).